Reading from the N-terminus, the 129-residue chain is Follitropin subunit beta (129 aa).

An N-terminal signal peptide occupies residues 1–18 (MKSVQFCFLFCCWRVICC). Intrachain disulfides connect Cys21–Cys69, Cys35–Cys84, Cys38–Cys122, Cys46–Cys100, Cys50–Cys102, and Cys105–Cys112. Residues Asn25 and Asn42 are each glycosylated (N-linked (GlcNAc...) asparagine).

The protein belongs to the glycoprotein hormones subunit beta family. Heterodimer. The active follitropin is a heterodimer composed of an alpha chain/CGA shared with other hormones and a unique beta chain/FSHB shown here.

The protein resides in the secreted. Its function is as follows. Together with the alpha chain CGA constitutes follitropin, the follicle-stimulating hormone, and provides its biological specificity to the hormone heterodimer. Binds FSHR, a G protein-coupled receptor, on target cells to activate downstream signaling pathways. Follitropin is involved in follicle development and spermatogenesis in reproductive organs. The chain is Follitropin subunit beta (FSHB) from Panthera tigris altaica (Siberian tiger).